The sequence spans 468 residues: Hydroxymethylglutaryl-CoA lyase, mitochondrial (468 aa).

Residues V168–I435 form the Pyruvate carboxyltransferase domain. R176 lines the substrate pocket. Residues D177, H368, and H370 each coordinate a divalent metal cation. The active site involves C401. N410 is a binding site for a divalent metal cation.

Belongs to the HMG-CoA lyase family. In terms of assembly, homodimer. Requires a divalent metal cation as cofactor.

The protein localises to the mitochondrion matrix. The catalysed reaction is (3S)-3-hydroxy-3-methylglutaryl-CoA = acetoacetate + acetyl-CoA. It functions in the pathway metabolic intermediate metabolism; (S)-3-hydroxy-3-methylglutaryl-CoA degradation; acetoacetate from (S)-3-hydroxy-3-methylglutaryl-CoA: step 1/1. Involved in the catabolism of branched amino acids such as leucine. This Arabidopsis thaliana (Mouse-ear cress) protein is Hydroxymethylglutaryl-CoA lyase, mitochondrial (HMGCL).